The primary structure comprises 335 residues: Phosphate acyltransferase (335 aa).

It belongs to the PlsX family. In terms of assembly, homodimer. Probably interacts with PlsY.

It localises to the cytoplasm. The enzyme catalyses a fatty acyl-[ACP] + phosphate = an acyl phosphate + holo-[ACP]. The protein operates within lipid metabolism; phospholipid metabolism. In terms of biological role, catalyzes the reversible formation of acyl-phosphate (acyl-PO(4)) from acyl-[acyl-carrier-protein] (acyl-ACP). This enzyme utilizes acyl-ACP as fatty acyl donor, but not acyl-CoA. This is Phosphate acyltransferase from Desulforudis audaxviator (strain MP104C).